The following is a 452-amino-acid chain: UPF0210 protein CHY_1509 (452 aa).

The protein belongs to the UPF0210 family. In terms of assembly, homodimer.

This chain is UPF0210 protein CHY_1509, found in Carboxydothermus hydrogenoformans (strain ATCC BAA-161 / DSM 6008 / Z-2901).